A 365-amino-acid polypeptide reads, in one-letter code: tRNA/tmRNA (uracil-C(5))-methyltransferase (365 aa).

Residues glutamine 196, tyrosine 224, asparagine 229, glutamate 245, and aspartate 298 each coordinate S-adenosyl-L-methionine. The active-site Nucleophile is cysteine 323. Glutamate 357 (proton acceptor) is an active-site residue.

This sequence belongs to the class I-like SAM-binding methyltransferase superfamily. RNA M5U methyltransferase family. TrmA subfamily.

The enzyme catalyses uridine(54) in tRNA + S-adenosyl-L-methionine = 5-methyluridine(54) in tRNA + S-adenosyl-L-homocysteine + H(+). It carries out the reaction uridine(341) in tmRNA + S-adenosyl-L-methionine = 5-methyluridine(341) in tmRNA + S-adenosyl-L-homocysteine + H(+). Functionally, dual-specificity methyltransferase that catalyzes the formation of 5-methyluridine at position 54 (m5U54) in all tRNAs, and that of position 341 (m5U341) in tmRNA (transfer-mRNA). This chain is tRNA/tmRNA (uracil-C(5))-methyltransferase, found in Nautilia profundicola (strain ATCC BAA-1463 / DSM 18972 / AmH).